Here is a 155-residue protein sequence, read N- to C-terminus: MSVCAVLLLCVAGLLCLSSACYIQNCPRGGKRALLEPVSRQCLACGPGDKGRCLGPSICCGEEIGCLVGSPWMARCQEEEYLPSPCQTAGKLCGSDAGPCAAPGVCCGTEGCKLDPNCSEDSESEEPADQNTLGASPGELLLRLLHPNNRKHNQY.

The N-terminal stretch at Met-1 to Ala-20 is a signal peptide. Cys-21 and Cys-26 form a disulfide bridge. The residue at position 29 (Gly-29) is a Glycine amide. Intrachain disulfides connect Cys-42-Cys-86, Cys-45-Cys-59, Cys-53-Cys-76, Cys-60-Cys-66, Cys-93-Cys-106, Cys-100-Cys-118, and Cys-107-Cys-112. Residues Ser-119–Ala-128 show a composition bias toward acidic residues. The tract at residues Ser-119–Glu-139 is disordered.

This sequence belongs to the vasopressin/oxytocin family.

It localises to the secreted. Its function is as follows. Vasotocin is an antidiuretic hormone. The protein is Vasotocin-neurophysin VT 2 of Catostomus commersonii (White sucker).